Here is a 120-residue protein sequence, read N- to C-terminus: Large ribosomal subunit protein uL14 (120 aa).

It belongs to the universal ribosomal protein uL14 family. In terms of assembly, part of the 50S ribosomal subunit. Forms a cluster with proteins L3 and L19. In the 70S ribosome, L14 and L19 interact and together make contacts with the 16S rRNA in bridges B5 and B8.

Functionally, binds to 23S rRNA. Forms part of two intersubunit bridges in the 70S ribosome. This chain is Large ribosomal subunit protein uL14, found in Aster yellows witches'-broom phytoplasma (strain AYWB).